Here is a 349-residue protein sequence, read N- to C-terminus: MTTQPSAPLTYRDAGVDIDAGDALVDRIKPLAARTMRPGVLAGIGGFGALFQVPGKYREPVLVSGTDGVGTKLRLAFEWNRHDTVGVDLVAMSVNDILVQGAEPLFFLDYFACGKLSVDTAAAVVGGIARGCELAGCALIGGETAEMPGMYPDGEYDLAGFAVGAVEKSAILDGKSIQPGDVVLGLASSGAHSNGYSLVRKILDRAGARPDQDFHGQPLADVVMAPTRIYVKQVLAALAAHTGGIKGLAHITGGGLLDNVPRILQPGLSARLHRDAWQMPQLFQWLQQQGGVADTEMHRVFNCGIGMVIVVDAAQADAVAATLAAQGETVSRIGEIVAQKDGEAQTVVV.

This sequence belongs to the AIR synthase family.

It is found in the cytoplasm. It carries out the reaction 2-formamido-N(1)-(5-O-phospho-beta-D-ribosyl)acetamidine + ATP = 5-amino-1-(5-phospho-beta-D-ribosyl)imidazole + ADP + phosphate + H(+). Its pathway is purine metabolism; IMP biosynthesis via de novo pathway; 5-amino-1-(5-phospho-D-ribosyl)imidazole from N(2)-formyl-N(1)-(5-phospho-D-ribosyl)glycinamide: step 2/2. The chain is Phosphoribosylformylglycinamidine cyclo-ligase from Bordetella petrii (strain ATCC BAA-461 / DSM 12804 / CCUG 43448).